Consider the following 286-residue polypeptide: Phosphatidylserine decarboxylase proenzyme (286 aa).

Residues Asp90, His147, and Ser250 each act as charge relay system; for autoendoproteolytic cleavage activity in the active site. The Schiff-base intermediate with substrate; via pyruvic acid; for decarboxylase activity role is filled by Ser250. Position 250 is a pyruvic acid (Ser); by autocatalysis (Ser250).

The protein belongs to the phosphatidylserine decarboxylase family. PSD-B subfamily. Prokaryotic type I sub-subfamily. Heterodimer of a large membrane-associated beta subunit and a small pyruvoyl-containing alpha subunit. Pyruvate is required as a cofactor. Is synthesized initially as an inactive proenzyme. Formation of the active enzyme involves a self-maturation process in which the active site pyruvoyl group is generated from an internal serine residue via an autocatalytic post-translational modification. Two non-identical subunits are generated from the proenzyme in this reaction, and the pyruvate is formed at the N-terminus of the alpha chain, which is derived from the carboxyl end of the proenzyme. The autoendoproteolytic cleavage occurs by a canonical serine protease mechanism, in which the side chain hydroxyl group of the serine supplies its oxygen atom to form the C-terminus of the beta chain, while the remainder of the serine residue undergoes an oxidative deamination to produce ammonia and the pyruvoyl prosthetic group on the alpha chain. During this reaction, the Ser that is part of the protease active site of the proenzyme becomes the pyruvoyl prosthetic group, which constitutes an essential element of the active site of the mature decarboxylase.

Its subcellular location is the cell membrane. It carries out the reaction a 1,2-diacyl-sn-glycero-3-phospho-L-serine + H(+) = a 1,2-diacyl-sn-glycero-3-phosphoethanolamine + CO2. The protein operates within phospholipid metabolism; phosphatidylethanolamine biosynthesis; phosphatidylethanolamine from CDP-diacylglycerol: step 2/2. Its function is as follows. Catalyzes the formation of phosphatidylethanolamine (PtdEtn) from phosphatidylserine (PtdSer). This is Phosphatidylserine decarboxylase proenzyme from Psychromonas ingrahamii (strain DSM 17664 / CCUG 51855 / 37).